The primary structure comprises 411 residues: Putative metal tolerance protein C3 (411 aa).

The Cytoplasmic portion of the chain corresponds to 1–115 (MEVNYCPETP…DRAERAAQEL (115 aa)). The helical transmembrane segment at 116-136 (AMQISNWANIFLLALKIYATV) threads the bilayer. The Vacuolar portion of the chain corresponds to 137–140 (KSGS). A helical membrane pass occupies residues 141-161 (IAIAASTLDSLLDLMAGGILW). The Cytoplasmic segment spans residues 162–184 (FTHLSMKNVNIYKYPIGKLRVQP). A helical transmembrane segment spans residues 185–205 (VGIIIFAAVMATLGFQVLLVA). Topologically, residues 206–222 (AEQLISNEPSEKMNHVQ) are vacuolar. A helical membrane pass occupies residues 223-243 (LIWLYSIMLSATAIKLVLWIY). Residues 244–262 (CKSSRNHIVRAYAKDHHFD) are Cytoplasmic-facing. Residues 263-283 (VVTNVLGLVAAVLANAFYWWL) form a helical membrane-spanning segment. At 284–287 (DPTG) the chain is on the vacuolar side. Residues 288-308 (AILLAIYTIVNWSGTVMENAV) traverse the membrane as a helical segment. Over 309–390 (SLIGQSAPPE…LPEVERAFVH (82 aa)) the chain is Cytoplasmic.

This sequence belongs to the cation diffusion facilitator (CDF) transporter (TC 2.A.4) family.

The protein localises to the vacuole membrane. Functionally, involved in sequestration of excess metal in the cytoplasm into vacuoles to maintain metal homeostasis. The sequence is that of Putative metal tolerance protein C3 (MTPC3) from Arabidopsis thaliana (Mouse-ear cress).